The sequence spans 102 residues: MNQYDLNLILNPNLSAEQVQIEKDYIETALKNVGAEVSNLDDLGNRRLAYQVGKDREGYYLMYTIKAGGNPEKDIASSLRLRDHVRRVLVVKDRPEWKTKKA.

Belongs to the bacterial ribosomal protein bS6 family.

In terms of biological role, binds together with bS18 to 16S ribosomal RNA. This Deinococcus deserti (strain DSM 17065 / CIP 109153 / LMG 22923 / VCD115) protein is Small ribosomal subunit protein bS6.